A 196-amino-acid polypeptide reads, in one-letter code: UPF0301 protein BF2109 (196 aa).

It belongs to the UPF0301 (AlgH) family.

This is UPF0301 protein BF2109 from Bacteroides fragilis (strain ATCC 25285 / DSM 2151 / CCUG 4856 / JCM 11019 / LMG 10263 / NCTC 9343 / Onslow / VPI 2553 / EN-2).